Here is a 584-residue protein sequence, read N- to C-terminus: Aspartate--tRNA(Asp/Asn) ligase (584 aa).

Residue E177 coordinates L-aspartate. The aspartate stretch occupies residues 201 to 204 (QLFK). Position 223 (R223) interacts with L-aspartate. Residues 223–225 (RDE) and Q232 each bind ATP. H447 is a binding site for L-aspartate. E481 serves as a coordination point for ATP. R488 is a binding site for L-aspartate. An ATP-binding site is contributed by 533–536 (GLDR).

The protein belongs to the class-II aminoacyl-tRNA synthetase family. Type 1 subfamily. As to quaternary structure, homodimer.

The protein resides in the cytoplasm. It carries out the reaction tRNA(Asx) + L-aspartate + ATP = L-aspartyl-tRNA(Asx) + AMP + diphosphate. Its function is as follows. Aspartyl-tRNA synthetase with relaxed tRNA specificity since it is able to aspartylate not only its cognate tRNA(Asp) but also tRNA(Asn). Reaction proceeds in two steps: L-aspartate is first activated by ATP to form Asp-AMP and then transferred to the acceptor end of tRNA(Asp/Asn). The chain is Aspartate--tRNA(Asp/Asn) ligase from Chlamydia caviae (strain ATCC VR-813 / DSM 19441 / 03DC25 / GPIC) (Chlamydophila caviae).